A 273-amino-acid chain; its full sequence is Galactose-binding lectin (273 aa).

The first 23 residues, methionine 1–serine 23, serve as a signal peptide directing secretion. Glutamate 144 and aspartate 146 together coordinate Mn(2+). Positions 146, 148, 150, and 155 each coordinate Ca(2+). Residues aspartate 155 and histidine 160 each coordinate Mn(2+).

Belongs to the leguminous lectin family. Homotetramer.

Its function is as follows. D-galactose specific lectin. The protein is Galactose-binding lectin of Arachis hypogaea (Peanut).